Reading from the N-terminus, the 184-residue chain is MNSRPTWIQVEFIRGSRTFVNLCWACILVCGATGFLLVGFSSCIGKDLIPILSSKQIAFIPQGLVMCFYGIAGLFLGLYLCCTVFWNVGSGYNYFDKREGISSIFRWGFPGKNRRIHIRLILGDIEAVGLRSQEGLFPSRILYLKVRGRQSIPLTRIGENSTPEYMEEKAAELARFLRISIEGF.

2 helical membrane-spanning segments follow: residues Val-20–Ser-42 and Ile-57–Tyr-79.

This sequence belongs to the Ycf4 family.

It is found in the plastid. It localises to the chloroplast thylakoid membrane. Its function is as follows. Seems to be required for the assembly of the photosystem I complex. This chain is Photosystem I assembly protein Ycf4, found in Adiantum capillus-veneris (Maidenhair fern).